Here is a 151-residue protein sequence, read N- to C-terminus: UPF0756 membrane protein LBA0919 (151 aa).

4 helical membrane passes run 4–24 (WLFLALILVVALLGKNMSLII), 52–72 (WGVTIISVAILIPIATGQIGF), 78–98 (TFKTPAGWIAILAGIAVAVLS), and 115–135 (LVLGTIIGVVAFKGVAAGPVI).

This sequence belongs to the UPF0756 family.

The protein localises to the cell membrane. The polypeptide is UPF0756 membrane protein LBA0919 (Lactobacillus acidophilus (strain ATCC 700396 / NCK56 / N2 / NCFM)).